We begin with the raw amino-acid sequence, 169 residues long: Nascent polypeptide-associated complex subunit alpha (169 aa).

The region spanning 14–78 (NKNEKKAREM…AKIDNFSQKL (65 aa)) is the NAC-A/B domain. The disordered stretch occupies residues 85–128 (IQSVSKSPEEIQKDMQLAADQAGDESAKPAAAAEEDDEAPVDAG). The region spanning 130-169 (LSAEDIELVASQANVSKNKAIKALKEHNGDIVNAIMALSK) is the UBA domain.

Belongs to the NAC-alpha family. In terms of assembly, part of the nascent polypeptide-associated complex (NAC), consisting of EGD2 and EGD1. NAC associates with ribosomes via EGD1.

The protein resides in the cytoplasm. The protein localises to the nucleus. In terms of biological role, component of the nascent polypeptide-associated complex (NAC), a dynamic component of the ribosomal exit tunnel, protecting the emerging polypeptides from interaction with other cytoplasmic proteins to ensure appropriate nascent protein targeting. The NAC complex also promotes mitochondrial protein import by enhancing productive ribosome interactions with the outer mitochondrial membrane and blocks the inappropriate interaction of ribosomes translating non-secretory nascent polypeptides with translocation sites in the membrane of the endoplasmic reticulum. EGD2 may also be involved in transcription regulation. This chain is Nascent polypeptide-associated complex subunit alpha (EGD2), found in Vanderwaltozyma polyspora (strain ATCC 22028 / DSM 70294 / BCRC 21397 / CBS 2163 / NBRC 10782 / NRRL Y-8283 / UCD 57-17) (Kluyveromyces polysporus).